Here is a 204-residue protein sequence, read N- to C-terminus: Small ribosomal subunit protein uS7 (204 aa).

M1 is subject to N-acetylmethionine. Position 2 is an N-acetylthreonine; in 40S ribosomal protein S5, N-terminally processed (T2). T14 is subject to Phosphothreonine. Position 47 is an N6-acetyllysine; alternate (K47). K47 is covalently cross-linked (Glycyl lysine isopeptide (Lys-Gly) (interchain with G-Cter in SUMO2); alternate). S142 carries the post-translational modification Phosphoserine.

Belongs to the universal ribosomal protein uS7 family. In terms of assembly, component of the small ribosomal subunit. Part of the small subunit (SSU) processome, composed of more than 70 proteins and the RNA chaperone small nucleolar RNA (snoRNA) U3.

It localises to the cytoplasm. Its subcellular location is the nucleus. The protein resides in the nucleolus. Its function is as follows. Component of the small ribosomal subunit. The ribosome is a large ribonucleoprotein complex responsible for the synthesis of proteins in the cell. Part of the small subunit (SSU) processome, first precursor of the small eukaryotic ribosomal subunit. During the assembly of the SSU processome in the nucleolus, many ribosome biogenesis factors, an RNA chaperone and ribosomal proteins associate with the nascent pre-rRNA and work in concert to generate RNA folding, modifications, rearrangements and cleavage as well as targeted degradation of pre-ribosomal RNA by the RNA exosome. This is Small ribosomal subunit protein uS7 (Rps5) from Mus musculus (Mouse).